A 283-amino-acid chain; its full sequence is Protease HtpX (283 aa).

The next 2 helical transmembrane spans lie at 4 to 24 and 33 to 53; these read ILLF…ILSV and GGIL…SLFL. Residue His-139 coordinates Zn(2+). Glu-140 is an active-site residue. Residue His-143 coordinates Zn(2+). A run of 2 helical transmembrane segments spans residues 147–167 and 190–210; these read GDMV…IFLS and IYFL…SIIA. Residue Glu-218 participates in Zn(2+) binding.

This sequence belongs to the peptidase M48B family. Zn(2+) serves as cofactor.

It is found in the cell inner membrane. In Haemophilus influenzae (strain PittGG), this protein is Protease HtpX.